The primary structure comprises 225 residues: Thymidylate kinase (225 aa).

Gly-10–Thr-17 contacts ATP.

This sequence belongs to the thymidylate kinase family.

It carries out the reaction dTMP + ATP = dTDP + ADP. Functionally, phosphorylation of dTMP to form dTDP in both de novo and salvage pathways of dTTP synthesis. The sequence is that of Thymidylate kinase from Oceanobacillus iheyensis (strain DSM 14371 / CIP 107618 / JCM 11309 / KCTC 3954 / HTE831).